The following is a 159-amino-acid chain: Large ribosomal subunit protein uL10 (159 aa).

The protein belongs to the universal ribosomal protein uL10 family. As to quaternary structure, part of the ribosomal stalk of the 50S ribosomal subunit. The N-terminus interacts with L11 and the large rRNA to form the base of the stalk. The C-terminus forms an elongated spine to which L12 dimers bind in a sequential fashion forming a multimeric L10(L12)X complex.

Forms part of the ribosomal stalk, playing a central role in the interaction of the ribosome with GTP-bound translation factors. This Campylobacter jejuni subsp. jejuni serotype O:2 (strain ATCC 700819 / NCTC 11168) protein is Large ribosomal subunit protein uL10 (rplJ).